The following is a 610-amino-acid chain: MATRQIEAWHRLTGQRPQTLRYFMMTTDLNNRRILRQRTASEAGIRWASRYFEYPVTQLLDLRPFGPVTRNPPFEGEPPPNLLVGYYYVMKAINAYLFDQRTVSNISYNLQLALATNERAMVWQVLTDSSYSIDTGAFSRALDGNTEDLGGTVVQIQNAVMMDRVLTSLTVTPVRGLGAVVREQNNNGIAAFTVRPNFPQARVSKRDATLLRNICECKKALINYITWSPCPPLPCQLDLPFNDGWVEDFVRHFSSASPMENNSQNLVGDFAAVMTMGKQAGMRGGALTLRSGTQTGLPMRLRQREGRRAVTATMRRRRGQAVQSFIDSLPIRRRRRRGTRRQVEREDSVREPPSPGEGPSGIRAPEEEEESFSDDVGLSREDDRADFNQEVVDTIGQLIEELERELNPAAEESGFFNFSQRMYGLLLQLQRENRLTFQMILTWLSNFFVLEHLASTLFYLNEQFVRNGLARRNIGLQFAQVILRGRSDTGRELYTRVWYNREREAFHTLYDRIVTDFIAVTEMADTETMFQAPEEREQLLADMQYVENSGSVDEVIAQLQTRAQQTDSVELSFRIKFSGLVGYSQNPVIQRSFERTREAAIGRWRRQQQQ.

The disordered stretch occupies residues 288 to 379; that stretch reads TLRSGTQTGL…ESFSDDVGLS (92 aa). Residues 328–337 carry the Nuclear localization signal motif; it reads SLPIRRRRRR. A compositionally biased stretch (basic residues) spans 331-340; that stretch reads IRRRRRRGTR. Residues 341–350 are compositionally biased toward basic and acidic residues; it reads RQVEREDSVR. O-(5'-phospho-DNA)-serine is present on Ser549.

It belongs to the adenoviridae terminal protein family. As to quaternary structure, heterodimer with the polymerase; this heterodimer binds to bp 9 to 18 of the genome. Interacts with host POU2F1; POU2F1 binds to the auxiliary sequences in the inverted terminal repeats and tethers the pTP-POL heterodimer to the origin DNA thereby participating in the assembly of the pre-initiation complex (POL-TP-DBP-NFIA-POU2F1). Post-translationally, preterminal protein is used to replicate viral genome, upon genomic encapsidation it is processed first into iTP and finally into TP by adenovirus protease.

It localises to the host nucleus matrix. Functionally, protein covalently bound to the viral DNA that acts as a primer for viral genomic replication by DNA strand displacement. Assembles on the viral origin of replication in an initiation complex with viral polymerase, DBP, host NFIA and host POU2F1/OCT1. During initiation, the polymerase covalently couples the first dCTP with Ser-580 of pTP. The terminal protein stimulates the template activity over 20 fold compared to protein-free templates. Neo-synthesized viral genomes are linked to two preterminal proteins, one for each 5' end. These new genomes are encapsidated in the nucleus, and during capsid maturation by viral protease, preterminal protein is first cleaved into intermediary (iTP), then into mature TP. May play a role in host nuclear matrix localization of genomic DNA. This is Preterminal protein from Snake adenovirus serotype 1 (SnAdV-1).